The sequence spans 457 residues: Chromosomal replication initiator protein DnaA (457 aa).

The interval 1–73 is domain I, interacts with DnaA modulators; it reads MANNYQTLYD…SKYLSEEFKK (73 aa). The tract at residues 73-108 is domain II; the sequence is KENIVNFEFIIDNEKLLINSNFLIKETNIKNRFNFS. Residues 109-331 form a domain III, AAA+ region region; it reads DELLRYNFNN…GNLKQICFWA (223 aa). Positions 156, 158, 159, and 160 each coordinate ATP. The segment at 332–457 is domain IV, binds dsDNA; sequence DNDTNKDLII…LQINLIINKF (126 aa).

This sequence belongs to the DnaA family. Oligomerizes as a right-handed, spiral filament on DNA at oriC.

The protein localises to the cytoplasm. Plays an essential role in the initiation and regulation of chromosomal replication. ATP-DnaA binds to the origin of replication (oriC) to initiate formation of the DNA replication initiation complex once per cell cycle. Binds the DnaA box (a 9 base pair repeat at the origin) and separates the double-stranded (ds)DNA. Forms a right-handed helical filament on oriC DNA; dsDNA binds to the exterior of the filament while single-stranded (ss)DNA is stabiized in the filament's interior. The ATP-DnaA-oriC complex binds and stabilizes one strand of the AT-rich DNA unwinding element (DUE), permitting loading of DNA polymerase. After initiation quickly degrades to an ADP-DnaA complex that is not apt for DNA replication. Binds acidic phospholipids. This is Chromosomal replication initiator protein DnaA from Ureaplasma parvum serovar 3 (strain ATCC 700970).